Consider the following 60-residue polypeptide: Large ribosomal subunit protein bL32 (60 aa).

The disordered stretch occupies residues 1–46 (MAVQQNKKSPSKRGMHRSHNALNTPGTAIEPTTGEVHLRHHISPTG). Over residues 9–19 (SPSKRGMHRSH) the composition is skewed to basic residues.

The protein belongs to the bacterial ribosomal protein bL32 family.

This is Large ribosomal subunit protein bL32 from Leptothrix cholodnii (strain ATCC 51168 / LMG 8142 / SP-6) (Leptothrix discophora (strain SP-6)).